The chain runs to 136 residues: Methylglyoxal synthase (136 aa).

Residues 1–136 (MKIALIAHDR…REVVREENEA (136 aa)) form the MGS-like domain. Residues histidine 8, lysine 12, 34-37 (TGTT), and 54-55 (SG) contribute to the substrate site. Aspartate 60 functions as the Proton donor/acceptor in the catalytic mechanism. Position 87 (histidine 87) interacts with substrate.

It belongs to the methylglyoxal synthase family.

The enzyme catalyses dihydroxyacetone phosphate = methylglyoxal + phosphate. Catalyzes the formation of methylglyoxal from dihydroxyacetone phosphate. In Brevibacillus brevis (strain 47 / JCM 6285 / NBRC 100599), this protein is Methylglyoxal synthase.